Reading from the N-terminus, the 117-residue chain is Chondroitin proteoglycan 7 (117 aa).

Residues 1–19 (MQTITLLALLACIAVPIFA) form the signal peptide. Residues 31–97 (VEASGEGSGE…SGENLSNGIV (67 aa)) are disordered. Composition is skewed to low complexity over residues 32–41 (EASGEGSGES) and 48–57 (ESSGEGSGES). Residues Ser-66, Ser-70, Ser-74, Ser-84, and Ser-88 are each glycosylated (O-linked (Xyl...) (chondroitin sulfate) serine). A compositionally biased stretch (low complexity) spans 75–95 (GASDAVLESSGEGSGENLSNG). Asn-91 carries an N-linked (GlcNAc...) asparagine glycan.

This is Chondroitin proteoglycan 7 (cpg-7) from Caenorhabditis briggsae.